Reading from the N-terminus, the 537-residue chain is Copine-3 (537 aa).

C2 domains lie at 1 to 115 (MAAQ…TRPL) and 124 to 247 (GKGS…PVEF). The residue at position 14 (S14) is a Phosphoserine. Residues D22, D28, D81, D83, D93, D154, and D160 each contribute to the Ca(2+) site. S197 carries the post-translational modification Phosphoserine. Ca(2+) is bound by residues D216, D218, and D224. At S243 the chain carries Phosphoserine. One can recognise a VWFA domain in the interval 291 to 513 (NFTVGVDFTG…AQCVLAEIPQ (223 aa)).

This sequence belongs to the copine family. In terms of assembly, monomer. Interacts with ERBB2 (preferentially with the tyrosine phosphorylated form); this interaction occurs at the cell membrane and is increased in a growth factor heregulin-dependent manner. Interacts with SHC1; this interaction may mediate the binding of CPNE3 with ERBB2. Interacts with RACK1. Ca(2+) is required as a cofactor. Phosphorylated on serine and threonine residues. As to expression, expressed in breast and weakly in prostate and ovarian tissues. Expressed in neutrophils (at protein level). Widely expressed. Expressed in the brain. Expressed in neutrophil precursors from the bone marrow and peripheral blood. Expressed in primary breast tumors and ovarian endometrioid adenocarcinoma.

Its subcellular location is the nucleus. The protein resides in the cytoplasm. It localises to the cell membrane. The protein localises to the cell junction. It is found in the focal adhesion. Functionally, calcium-dependent phospholipid-binding protein that plays a role in ERBB2-mediated tumor cell migration in response to growth factor heregulin stimulation. In Homo sapiens (Human), this protein is Copine-3.